Here is a 423-residue protein sequence, read N- to C-terminus: Alpha-1-antichymotrypsin (423 aa).

An N-terminal signal peptide occupies residues 1-23; the sequence is MERMLPFLALGLLVAGFCPAVLC. Residues asparagine 93, asparagine 106, asparagine 127, asparagine 186, and asparagine 271 are each glycosylated (N-linked (GlcNAc...) asparagine). The RCL stretch occupies residues 369 to 394; that stretch reads GTEASAATAVKITLLSALVDPMTIVR.

It belongs to the serpin family. As to quaternary structure, interacts with DNAJC1. As to expression, plasma.

The protein localises to the secreted. Although its physiological function is unclear, it can inhibit neutrophil cathepsin G and mast cell chymase, both of which can convert angiotensin-1 to the active angiotensin-2. The polypeptide is Alpha-1-antichymotrypsin (SERPINA3) (Pongo abelii (Sumatran orangutan)).